We begin with the raw amino-acid sequence, 294 residues long: Tryptophan 2,3-dioxygenase (294 aa).

The tract at residues 1–20 (MSEFKGCPFSGAASEAGTKA) is disordered. Residues 63-67 (FIVQH), Tyr-125, and Arg-129 each bind substrate. Heme is bound at residue His-252. Thr-266 serves as a coordination point for substrate.

It belongs to the tryptophan 2,3-dioxygenase family. As to quaternary structure, homotetramer. The cofactor is heme.

It carries out the reaction L-tryptophan + O2 = N-formyl-L-kynurenine. It participates in amino-acid degradation; L-tryptophan degradation via kynurenine pathway; L-kynurenine from L-tryptophan: step 1/2. Heme-dependent dioxygenase that catalyzes the oxidative cleavage of the L-tryptophan (L-Trp) pyrrole ring and converts L-tryptophan to N-formyl-L-kynurenine. Catalyzes the oxidative cleavage of the indole moiety. The polypeptide is Tryptophan 2,3-dioxygenase (Cupriavidus necator (strain ATCC 17699 / DSM 428 / KCTC 22496 / NCIMB 10442 / H16 / Stanier 337) (Ralstonia eutropha)).